The primary structure comprises 557 residues: Membrane protein insertase YidC (557 aa).

3 helical membrane passes run 371–391, 437–457, and 515–535; these read WGWS…PLSA, LGGC…YWVL, and PIVF…YWVV.

The protein belongs to the OXA1/ALB3/YidC family. Type 1 subfamily. Interacts with the Sec translocase complex via SecD. Specifically interacts with transmembrane segments of nascent integral membrane proteins during membrane integration.

The protein resides in the cell inner membrane. Its function is as follows. Required for the insertion and/or proper folding and/or complex formation of integral membrane proteins into the membrane. Involved in integration of membrane proteins that insert both dependently and independently of the Sec translocase complex, as well as at least some lipoproteins. Aids folding of multispanning membrane proteins. The polypeptide is Membrane protein insertase YidC (Polynucleobacter necessarius subsp. necessarius (strain STIR1)).